The primary structure comprises 88 residues: Small ribosomal subunit protein bS16 (88 aa).

This sequence belongs to the bacterial ribosomal protein bS16 family.

In Anaeromyxobacter sp. (strain K), this protein is Small ribosomal subunit protein bS16.